The sequence spans 436 residues: GTPase Der (436 aa).

EngA-type G domains follow at residues 4 to 167 (PIVA…GEEE) and 176 to 351 (IRLS…ENHK). GTP contacts are provided by residues 10–17 (GRPNVGKS), 57–61 (DTGGI), 119–122 (NKVD), 182–189 (GRPNVGKS), 229–233 (DTAGM), and 294–297 (NKWD). Residues 352–436 (KRVQSSTLNE…PIHIIARKRN (85 aa)) form the KH-like domain.

The protein belongs to the TRAFAC class TrmE-Era-EngA-EngB-Septin-like GTPase superfamily. EngA (Der) GTPase family. Associates with the 50S ribosomal subunit.

GTPase that plays an essential role in the late steps of ribosome biogenesis. The chain is GTPase Der from Staphylococcus aureus (strain Mu3 / ATCC 700698).